The following is a 928-amino-acid chain: Dual serine/threonine and tyrosine protein kinase (928 aa).

Residues 1-14 (MEGDGVPWGSEPES) show a composition bias toward low complexity. Disordered stretches follow at residues 1–22 (MEGD…GGGG) and 55–81 (LRGS…AGDV). The stretch at 394–430 (RKKENELYESLMNIANRKQEEMKDMIVETLNTMKEEL) forms a coiled coil. One can recognise a Protein kinase domain in the interval 651–905 (PKLGQELGRG…PLLGIVQPML (255 aa)). Residues 657–665 (LGRGQYGVV) and Lys680 each bind ATP. Catalysis depends on Asp776, which acts as the Proton acceptor.

Belongs to the protein kinase superfamily. Ser/Thr protein kinase family.

The protein resides in the cytoplasm. It localises to the cell membrane. Its subcellular location is the apical cell membrane. It is found in the basolateral cell membrane. The protein localises to the cell junction. It catalyses the reaction L-seryl-[protein] + ATP = O-phospho-L-seryl-[protein] + ADP + H(+). It carries out the reaction L-threonyl-[protein] + ATP = O-phospho-L-threonyl-[protein] + ADP + H(+). The enzyme catalyses L-tyrosyl-[protein] + ATP = O-phospho-L-tyrosyl-[protein] + ADP + H(+). Its function is as follows. Acts as a positive regulator of ERK phosphorylation downstream of fibroblast growth factor-receptor activation. Involved in the regulation of both caspase-dependent apoptosis and caspase-independent cell death. In the skin, it plays a predominant role in suppressing caspase-dependent apoptosis in response to UV stress in a range of dermal cell types. In Bos taurus (Bovine), this protein is Dual serine/threonine and tyrosine protein kinase (DSTYK).